The chain runs to 211 residues: Ras-related protein rab-11.1 (211 aa).

18-26 (GDSGVGKSN) serves as a coordination point for GTP. The short motif at 40 to 48 (SKSTIGVEF) is the Effector region element. Residues 66 to 70 (DTAGQ), 124 to 127 (NKSD), and 154 to 156 (SAL) each bind GTP. Residues 187–211 (GYGGGSGTIIPSPASDPPKKQCCIP) are disordered. S-geranylgeranyl cysteine attachment occurs at residues Cys-208 and Cys-209.

Belongs to the small GTPase superfamily. Rab family. In terms of assembly, interacts with rei-1 and rei-2. The GDP-form preferentially binds to rei-1 and rei-2. Expressed weakly in sperm, but more predominantly in oocytes. Expressed in the intestine.

Its subcellular location is the cytoplasmic vesicle. It localises to the secretory vesicle. The protein localises to the endosome. The protein resides in the cytoplasm. It is found in the cytoskeleton. Its subcellular location is the spindle. It localises to the microtubule organizing center. The protein localises to the spindle pole body. The protein resides in the centrosome. It is found in the apical cell membrane. Its subcellular location is the cytosol. It localises to the recycling endosome membrane. The protein localises to the golgi apparatus membrane. The protein resides in the cytoplasmic granule. Functionally, the small GTPases Rab are key regulators of intracellular membrane trafficking, from the formation of transport vesicles to their fusion with membranes. Rabs cycle between an inactive GDP-bound form and an active GTP-bound form that is able to recruit to membranes different set of downstream effectors directly responsible for vesicle formation, movement, tethering and fusion. Involved in regulating the meiotic maturation of oocytes. Plays a role in egg shell formation, regulating exocytosis of chondroitin proteoglycans following fertilization. Controls cortical granule localization and targets them to the plasma membrane for exocytosis. Acts as a major regulator of membrane delivery during cytokinesis. Regulates the cytoskeleton by facilitating astral microtubule elongation and organization during metaphase to ensure proper spindle alignment and polarity in the first embryonic cell division. Maintains normal endoplasmic reticulum morphology during metaphase. Involved in vesicle formation and plasma membrane repair following exposure to pore forming toxins. Regulates endocytic recycling. May play a role in yolk receptor endocytosis in growing oocytes. Plays a role in the shedding of pathogen spores from intestinal cells via its involvement in spore fusion and endocytic trafficking. This chain is Ras-related protein rab-11.1, found in Caenorhabditis elegans.